Consider the following 439-residue polypeptide: Niacin transporter NiaP (439 aa).

12 helical membrane passes run 20 to 40 (LWVVGLGWMFDALDTGIIAFI), 57 to 77 (WIVSIGFIGMALGAVFSGGLA), 84 to 104 (TVFATTLLIYSLATAACAFAP), 108 to 128 (WLLAFRFIVGLGLGGQLPVAV), 143 to 163 (FIVLLESFWGLGWLVAALVSY), 169 to 189 (FGWHIAFLIGGLPAIYVYVII), 253 to 273 (LMLWLVWFGIVFSYYGIFTWL), 288 to 308 (FEYVLIMILAQLPGYISAAWL), 316 to 336 (ATLAGFIGACAISAYFFGQAD), 338 to 358 (VFNIMVWGCLLSFFNLGAWGV), 374 to 394 (FGAGWASAVGRMGGIAAPIVV), and 407 to 427 (VFMMFTLVLLAVAAVIVILGE).

The protein belongs to the major facilitator superfamily. Sugar transporter (TC 2.A.1.1) family.

It is found in the cell inner membrane. Functionally, functions as a high-affinity transporter of niacin (nicotinamide or nicotinate). Probably substantially contributes to niacin transport when its concentration in the medium is very low. The sequence is that of Niacin transporter NiaP from Acinetobacter baylyi (strain ATCC 33305 / BD413 / ADP1).